The following is a 166-amino-acid chain: Nascent polypeptide-associated complex subunit beta (166 aa).

Disordered stretches follow at residues 1-40 (MVLN…EDPK) and 129-166 (HAAS…DKLD). The region spanning 35-100 (GGEDPKLQAA…GVDKELTELV (66 aa)) is the NAC-A/B domain. Positions 141–153 (DDDDVPDVVENFD) are enriched in acidic residues. The segment covering 154–166 (EADKKETEVDKLD) has biased composition (basic and acidic residues).

Belongs to the NAC-beta family. In terms of assembly, part of the nascent polypeptide-associated complex (NAC), consisting of EGD2 and EGD1. NAC associates with ribosomes via EGD1.

It localises to the cytoplasm. The protein localises to the nucleus. Its function is as follows. Component of the nascent polypeptide-associated complex (NAC), a dynamic component of the ribosomal exit tunnel, protecting the emerging polypeptides from interaction with other cytoplasmic proteins to ensure appropriate nascent protein targeting. The NAC complex also promotes mitochondrial protein import by enhancing productive ribosome interactions with the outer mitochondrial membrane and blocks the inappropriate interaction of ribosomes translating non-secretory nascent polypeptides with translocation sites in the membrane of the endoplasmic reticulum. EGD1 may act as a transcription factor that exert a negative effect on the expression of several genes that are transcribed by RNA polymerase II. This Mycosarcoma maydis (Corn smut fungus) protein is Nascent polypeptide-associated complex subunit beta (EGD1).